Reading from the N-terminus, the 534-residue chain is MAQGLYVGGFVDVVSCPKLEQELYLDPDQVTDYLPVTEPLPITIEHLPETEVGWTLGLFQVSHGIFCTGAITSPAFLELASRLADTSHVARAPVKNLPKEPLLEILHTWLPGLSLSSIHPRELSQTPSGPVFQHVSLCALGRRRGTVAVYGHDAEWVVSRFSSVSKSERAHILQHVSSCRLEDLSTPNFVSPLETLMAKAIDASFIRDRLDLLKTDRGVASILSPAYLKASQFPVGIQAVTPPRPAMNSSGQEDIISIPKSAFLSMLQSSIDGMKTTAAKMSHTLSGPGLMGCGGQMFPTDHHLPSYVSNPAPPYGYAYKNPYDPWYYSPQLPGYRTGKRKRGAEDDEGHLFPGEEPAYHKDILSMSKNIAEIQSELKEMKLNGWHAGPPPSSSAAAAAVDPHYRPHANSAAPCQFPTMKEHGGTYVHPPIYVQAPHGQFQQAAPILFAQPHVSHPPVSTGLAVVGAPPAEPTPASSTQSIQQQAPETTHTPCAAVEKDAPTPNPTSNRVEASSRSSPKSKIRKMFCEELLNKQ.

Residues histidine 46, serine 114, and histidine 134 each act as charge relay system in the active site. Residues 253–272 are interaction with pAP; sequence EDIISIPKSAFLSMLQSSID. Positions 336–342 match the Nuclear localization signal motif; sequence RTGKRKR. 2 disordered regions span residues 337–356 and 466–524; these read TGKR…PGEE and GAPP…KIRK. The span at 479 to 491 shows a compositional bias: polar residues; it reads QSIQQQAPETTHT. The tract at residues 514–534 is interaction with major capsid protein; the sequence is SRSSPKSKIRKMFCEELLNKQ.

Belongs to the herpesviridae capsid scaffolding protein family. As to quaternary structure, homomultimer. Interacts with major capsid protein. In terms of assembly, exists in a monomer-dimer equilibrium with the dimer being the active species. Capsid scaffolding protein is cleaved by assemblin after formation of the spherical procapsid. As a result, the capsid obtains its mature, icosahedral shape. Cleavages occur at two or more sites: release (R-site) and maturation (M-site).

Its subcellular location is the host cytoplasm. It localises to the host nucleus. It catalyses the reaction Cleaves -Ala-|-Ser- and -Ala-|-Ala- bonds in the scaffold protein.. Acts as a scaffold protein by binding major capsid protein in the cytoplasm, inducing the nuclear localization of both proteins. Multimerizes in the nucleus such as major capsid protein forms the icosahedral T=16 capsid. Autocatalytic cleavage releases the assembly protein, and subsequently abolishes interaction with major capsid protein. Cleavages products are evicted from the capsid before or during DNA packaging. Functionally, protease that plays an essential role in virion assembly within the nucleus. Catalyzes the cleavage of the assembly protein after formation of the spherical procapsid. By that cleavage, the capsid matures and gains its icosahedral shape. The cleavage sites seem to include -Ala-Ser-, -Ala-Ala-, as well as Ala-Thr bonds. Assemblin and cleavages products are evicted from the capsid before or during DNA packaging. Its function is as follows. Plays a major role in capsid assembly. Acts as a scaffold protein by binding major capsid protein. Multimerizes in the nucleus such as major capsid protein forms the icosahedral T=16 capsid. Cleaved by assemblin after capsid completion. The cleavages products are evicted from the capsid before or during DNA packaging. The chain is Capsid scaffolding protein (ORF17) from Human herpesvirus 8 type P (isolate GK18) (HHV-8).